A 236-amino-acid chain; its full sequence is Ribosome assembly factor MRT4 (236 aa).

This sequence belongs to the universal ribosomal protein uL10 family. As to quaternary structure, associates with the pre-60S ribosomal particle.

It is found in the nucleus. It localises to the nucleolus. The protein resides in the cytoplasm. Its function is as follows. Component of the ribosome assembly machinery. Nuclear paralog of the ribosomal protein P0, it binds pre-60S subunits at an early stage of assembly in the nucleolus, and is replaced by P0 in cytoplasmic pre-60S subunits and mature 80S ribosomes. The polypeptide is Ribosome assembly factor MRT4 (Saccharomyces cerevisiae (strain ATCC 204508 / S288c) (Baker's yeast)).